A 783-amino-acid polypeptide reads, in one-letter code: Tripartite motif-containing protein 67 (783 aa).

An RING-type; degenerate zinc finger spans residues cysteine 7–glutamate 42. The B box-type 1; degenerate zinc-finger motif lies at alanine 206 to proline 253. Residues lysine 247–serine 295 form a disordered region. Pro residues predominate over residues glutamine 252 to alanine 261. The segment covering proline 275–glycine 293 has biased composition (gly residues). Residues arginine 298–leucine 340 form a B box-type 2 zinc finger. Zn(2+) is bound by residues cysteine 303, histidine 306, cysteine 326, and histidine 332. Positions lysine 345–asparagine 382 form a coiled coil. One can recognise a COS domain in the interval isoleucine 448–isoleucine 506. The region spanning proline 513–valine 607 is the Fibronectin type-III domain. A B30.2/SPRY domain is found at asparagine 589–leucine 780.

The protein belongs to the TRIM/RBCC family.

It localises to the cytoplasm. Its subcellular location is the cytoskeleton. The chain is Tripartite motif-containing protein 67 (TRIM67) from Homo sapiens (Human).